The primary structure comprises 527 residues: Organic cation/carnitine transporter 2 (527 aa).

Over 1-27 (MAEPTQPLLTDSNSSSPRSLDDTIESY) the chain is Cytoplasmic. A helical membrane pass occupies residues 28–48 (IGSFGWAQFLQAALVSFSGVF). Over 49 to 119 (DAQQTFISVF…SFVKGLPESS (71 aa)) the chain is Extracellular. The helical transmembrane segment at 120 to 140 (FFVGCLIGGLVLSTLADSSLG) threads the bilayer. At 141-149 (RKNMLFLSC) the chain is on the cytoplasmic side. A helical transmembrane segment spans residues 150–170 (LVMAISTMLTVFSPNIWVYAV). Over 171 to 176 (LRFVNG) the chain is Extracellular. The chain crosses the membrane as a helical span at residues 177 to 195 (FGRATIGTCALVLSTELVG). 190-197 (STELVGKK) contacts ATP. Residues 196 to 201 (KKWRGR) are Cytoplasmic-facing. A helical transmembrane segment spans residues 202-222 (VGIMSFFGFMLGFLSLPLMAY). Residues 223 to 230 (MNRGSSWR) are Extracellular-facing. A helical transmembrane segment spans residues 231–251 (ILYAWTSIPTIIYCVLVRFFV). Residues 252-326 (CESPRWLFVR…LVEKRWALKR (75 aa)) lie on the Cytoplasmic side of the membrane. The chain crosses the membrane as a helical span at residues 327–347 (LSAVMAIAFGIGLVYYGMPLA). Residues 348 to 356 (LSNLDFNIY) lie on the Extracellular side of the membrane. Residues 357 to 377 (LSAAFNALMDLPANLITLFLV) form a helical membrane-spanning segment. Over 378–385 (DKLSRRNA) the chain is Cytoplasmic. Residues 386–406 (LIGFTALGGVSSVLIFALHNM) form a helical membrane-spanning segment. The Extracellular segment spans residues 407 to 415 (RIGNHGALQ). The chain crosses the membrane as a helical span at residues 416–436 (LALELISYFSACSAFNMEMIY). Residues 437-448 (TIELFPTCVRNS) are Cytoplasmic-facing. Residues 449–469 (AIAMARQALVLGGVFSPIMVA) traverse the membrane as a helical segment. Residues 470 to 475 (AGRKNA) lie on the Extracellular side of the membrane. The helical transmembrane segment at 476–496 (FWSFGLFGLAIGLLGLFAVGL) threads the bilayer. Over 497-527 (PETRGSDLCDTMDEEECKDRRSKVAVNNVIA) the chain is Cytoplasmic.

Belongs to the major facilitator (TC 2.A.1) superfamily. Organic cation transporter (TC 2.A.1.19) family. As to expression, weakly expressed in roots, including tips and initiation site of lateral roots, siliques and flowers, especially in pollen and stigma.

The protein resides in the vacuole membrane. In terms of biological role, high affinity carnitine transporter involved in the active cellular uptake of carnitine. Also transports organic cations. This Arabidopsis thaliana (Mouse-ear cress) protein is Organic cation/carnitine transporter 2 (OCT2).